Reading from the N-terminus, the 356-residue chain is C-C chemokine receptor 1-like protein 1 (356 aa).

The Extracellular portion of the chain corresponds to 1–32 (MEIPAVTEPSYNTVAKNDFMSGFLCFSINVRA). Residues 33–60 (FGITVLTPLYSLVFIIGVIGHVLVVLVL) traverse the membrane as a helical segment. The Cytoplasmic segment spans residues 61-67 (IQHKRLR). The chain crosses the membrane as a helical span at residues 68 to 92 (NMTSIYLFNLAISDLVFLSTLPFWV). Over 93–108 (DYIMKGDWIFGNAMCK) the chain is Extracellular. Cysteine 107 and cysteine 184 are disulfide-bonded. The helical transmembrane segment at 109–130 (FVSGFYYLGLYSDMFFITLLTI) threads the bilayer. Over 131 to 147 (DRYLAVVHVVFALRART) the chain is Cytoplasmic. A helical membrane pass occupies residues 148 to 172 (VTFGIISSIITWVLAALVSIPCLYV). At 173–198 (FKSQMEFTYHTCRAILPRKSLIRFLR) the chain is on the extracellular side. A helical membrane pass occupies residues 199–224 (FQALTMNILGLILPLLAMIICYTRII). Residues 225 to 240 (NVLHRRPNKKKAKVMR) are Cytoplasmic-facing. Residues 241–265 (LIFVITLLFFLLLAPYYLAAFVSAF) form a helical membrane-spanning segment. Residues 266 to 282 (EDVLFTPSCLRSQQVDL) are Extracellular-facing. The chain crosses the membrane as a helical span at residues 283–306 (SLMITEALAYTHCCVNPVIYVFVG). Over 307-356 (KRFRKYLWQLFRRHTAITLPQWLPFLSVDRAQRASATPPSTVEIETSADL) the chain is Cytoplasmic.

Belongs to the G-protein coupled receptor 1 family. As to expression, detected in the spleen, liver and leukocytes.

The protein localises to the cell membrane. Its function is as follows. Probable receptor for a C-C type chemokine. In Mus musculus (Mouse), this protein is C-C chemokine receptor 1-like protein 1 (Ccr1l1).